Consider the following 578-residue polypeptide: Acyl-coenzyme A synthetase ACSM5, mitochondrial (578 aa).

A mitochondrion-targeting transit peptide spans 1 to 22 (MRLWLRGLVYQARRSSWGVFRI). At lysine 96 the chain carries N6-acetyllysine; alternate. Residue lysine 96 is modified to N6-succinyllysine; alternate. Lysine 151 is subject to N6-acetyllysine. Residue 229–237 (TSGTTGTPK) coordinates ATP. An N6-acetyllysine modification is found at lysine 335. ATP contacts are provided by residues 367–372 (EGYGQS), aspartate 454, arginine 469, and lysine 565.

Belongs to the ATP-dependent AMP-binding enzyme family. Mg(2+) is required as a cofactor. The cofactor is Mn(2+).

It localises to the mitochondrion matrix. The catalysed reaction is a medium-chain fatty acid + ATP + CoA = a medium-chain fatty acyl-CoA + AMP + diphosphate. Its function is as follows. Catalyzes the activation of fatty acids by CoA to produce an acyl-CoA, the first step in fatty acid metabolism. In Rattus norvegicus (Rat), this protein is Acyl-coenzyme A synthetase ACSM5, mitochondrial (Acsm5).